Reading from the N-terminus, the 101-residue chain is Citrate lyase acyl carrier protein (101 aa).

S14 carries the O-(phosphoribosyl dephospho-coenzyme A)serine modification.

The protein belongs to the CitD family. As to quaternary structure, oligomer with a subunit composition of (alpha,beta,gamma)6.

It localises to the cytoplasm. Covalent carrier of the coenzyme of citrate lyase. This is Citrate lyase acyl carrier protein from Lacticaseibacillus casei (strain BL23) (Lactobacillus casei).